A 616-amino-acid chain; its full sequence is Chaperone protein DnaK (616 aa).

At T175 the chain carries Phosphothreonine; by autocatalysis. A disordered region spans residues 579–616 (GGDPSQAGGFDPNAAGGAQQEPHDDNVVDADFKVDDDK). Over residues 599–616 (EPHDDNVVDADFKVDDDK) the composition is skewed to basic and acidic residues.

The protein belongs to the heat shock protein 70 family.

In terms of biological role, acts as a chaperone. This chain is Chaperone protein DnaK, found in Clostridium botulinum (strain Eklund 17B / Type B).